Reading from the N-terminus, the 136-residue chain is MRLWGLLPFLVPFILLWSIQEPELAEGFFIRTCPRVRVKCEVEERNECTRHRQCPNKKRCCLFSCGKKCMDLRQDVCSLPQDPGPCLAYLPRWWYNQETDLCTEFIYGGCQGNPNNFPSEGICTVVCKKKQMSSWI.

The first 27 residues, 1-27 (MRLWGLLPFLVPFILLWSIQEPELAEG), serve as a signal peptide directing secretion. Positions 28-73 (FFIRTCPRVRVKCEVEERNECTRHRQCPNKKRCCLFSCGKKCMDLR) constitute a WAP domain. Intrachain disulfides connect C33–C61, C40–C65, C48–C60, C54–C69, C77–C127, C86–C110, and C102–C123. One can recognise a BPTI/Kunitz inhibitor domain in the interval 77–127 (CSLPQDPGPCLAYLPRWWYNQETDLCTEFIYGGCQGNPNNFPSEGICTVVC).

It localises to the secreted. This is WAP four-disulfide core domain protein 6A (Wfdc6a) from Mus musculus (Mouse).